The primary structure comprises 300 residues: Energy-coupling factor transporter ATP-binding protein EcfA2 (300 aa).

The ABC transporter domain occupies 3-258 (IKAKNIVKIY…NKFLIENKML (256 aa)). An ATP-binding site is contributed by 40–47 (GQTGSGKT).

Belongs to the ABC transporter superfamily. Energy-coupling factor EcfA family. In terms of assembly, forms a stable energy-coupling factor (ECF) transporter complex composed of 2 membrane-embedded substrate-binding proteins (S component), 2 ATP-binding proteins (A component) and 2 transmembrane proteins (T component).

Its subcellular location is the cell membrane. Functionally, ATP-binding (A) component of a common energy-coupling factor (ECF) ABC-transporter complex. Unlike classic ABC transporters this ECF transporter provides the energy necessary to transport a number of different substrates. In Mesomycoplasma hyopneumoniae (strain 7448) (Mycoplasma hyopneumoniae), this protein is Energy-coupling factor transporter ATP-binding protein EcfA2.